A 218-amino-acid polypeptide reads, in one-letter code: Probable transaldolase (218 aa).

The Schiff-base intermediate with substrate role is filled by Lys-87.

Belongs to the transaldolase family. Type 3B subfamily.

Its subcellular location is the cytoplasm. The enzyme catalyses D-sedoheptulose 7-phosphate + D-glyceraldehyde 3-phosphate = D-erythrose 4-phosphate + beta-D-fructose 6-phosphate. Its pathway is carbohydrate degradation; pentose phosphate pathway; D-glyceraldehyde 3-phosphate and beta-D-fructose 6-phosphate from D-ribose 5-phosphate and D-xylulose 5-phosphate (non-oxidative stage): step 2/3. Transaldolase is important for the balance of metabolites in the pentose-phosphate pathway. This Phocaeicola vulgatus (strain ATCC 8482 / DSM 1447 / JCM 5826 / CCUG 4940 / NBRC 14291 / NCTC 11154) (Bacteroides vulgatus) protein is Probable transaldolase.